A 438-amino-acid polypeptide reads, in one-letter code: NADH-quinone oxidoreductase subunit D (438 aa).

It belongs to the complex I 49 kDa subunit family. In terms of assembly, NDH-1 is composed of 14 different subunits. Subunits NuoB, C, D, E, F, and G constitute the peripheral sector of the complex.

It is found in the cell membrane. The enzyme catalyses a quinone + NADH + 5 H(+)(in) = a quinol + NAD(+) + 4 H(+)(out). In terms of biological role, NDH-1 shuttles electrons from NADH, via FMN and iron-sulfur (Fe-S) centers, to quinones in the respiratory chain. The immediate electron acceptor for the enzyme in this species is believed to be a menaquinone. Couples the redox reaction to proton translocation (for every two electrons transferred, four hydrogen ions are translocated across the cytoplasmic membrane), and thus conserves the redox energy in a proton gradient. This chain is NADH-quinone oxidoreductase subunit D, found in Rhodococcus jostii (strain RHA1).